We begin with the raw amino-acid sequence, 292 residues long: Ribosomal protein L11 methyltransferase (292 aa).

Residues Thr-144, Gly-165, Asp-187, and Asn-229 each contribute to the S-adenosyl-L-methionine site.

It belongs to the methyltransferase superfamily. PrmA family.

It is found in the cytoplasm. It catalyses the reaction L-lysyl-[protein] + 3 S-adenosyl-L-methionine = N(6),N(6),N(6)-trimethyl-L-lysyl-[protein] + 3 S-adenosyl-L-homocysteine + 3 H(+). Its function is as follows. Methylates ribosomal protein L11. In Pseudomonas fluorescens (strain ATCC BAA-477 / NRRL B-23932 / Pf-5), this protein is Ribosomal protein L11 methyltransferase.